The chain runs to 283 residues: 9,11-endoperoxide prostaglandin H2 reductase (283 aa).

NADP(+) contacts are provided by residues 23–24 (VW) and D48. Y53 functions as the Proton donor in the catalytic mechanism. H111 contacts substrate. Residues 140-141 (SN), Q162, 188-193 (WSPLGS), 234-236 (KST), and 240-244 (RIQEN) contribute to the NADP(+) site. Residues 264-283 (NEDKRIGGDPDNFFPGGEEA) form a disordered region.

The protein belongs to the aldo/keto reductase family. As to quaternary structure, monomer.

Its subcellular location is the cytoplasm. It carries out the reaction prostaglandin F2alpha + NADP(+) = prostaglandin H2 + NADPH + H(+). It functions in the pathway lipid metabolism; prostaglandin biosynthesis. Its function is as follows. Catalyzes the NADP-dependent formation of prostaglandin F2-alpha from prostaglandin H2. Also has aldo/ketoreductase activity towards the synthetic substrates 9,10-phenanthrenequinone and p-nitrobenzaldehyde. In Trypanosoma cruzi (strain CL Brener), this protein is 9,11-endoperoxide prostaglandin H2 reductase.